The chain runs to 549 residues: Urocanate hydratase (549 aa).

NAD(+) contacts are provided by residues 46–47, Q124, E190, R195, 236–237, 257–261, 267–268, and Y316; these read GG, NA, QTSAH, and YV. C404 is a catalytic residue. Residue G486 coordinates NAD(+).

It belongs to the urocanase family. It depends on NAD(+) as a cofactor.

The protein resides in the cytoplasm. It catalyses the reaction 4-imidazolone-5-propanoate = trans-urocanate + H2O. Its pathway is amino-acid degradation; L-histidine degradation into L-glutamate; N-formimidoyl-L-glutamate from L-histidine: step 2/3. Functionally, catalyzes the conversion of urocanate to 4-imidazolone-5-propionate. This Thermoanaerobacter pseudethanolicus (strain ATCC 33223 / 39E) (Clostridium thermohydrosulfuricum) protein is Urocanate hydratase.